The chain runs to 191 residues: MRLIIMGPPGAGKGTQAKYIAEHFKIPAISTGDIFRANVTEGTPLGVEAKRYMDAGEYVPDEVTNRMVRNRIDEPDAVGGFLLDGYPRTVAQVEELDGMIRFTGHRLDAVVCLTVDQDEIVGRLLQRAQVEGRADDTEDVIRRRQDLYLEQTAPLIEIYKQRDLVHEVDGIGEVDEVTARIFQALDVIPES.

10-15 provides a ligand contact to ATP; it reads GAGKGT. Residues 30 to 59 are NMP; the sequence is STGDIFRANVTEGTPLGVEAKRYMDAGEYV. AMP-binding positions include T31, R36, 57–59, 85–88, and Q92; these read EYV and GYPR. The interval 126–136 is LID; the sequence is QRAQVEGRADD. R127 is an ATP binding site. R133 and R144 together coordinate AMP. G172 is a binding site for ATP.

Belongs to the adenylate kinase family. Monomer.

The protein localises to the cytoplasm. The catalysed reaction is AMP + ATP = 2 ADP. Its pathway is purine metabolism; AMP biosynthesis via salvage pathway; AMP from ADP: step 1/1. Catalyzes the reversible transfer of the terminal phosphate group between ATP and AMP. Plays an important role in cellular energy homeostasis and in adenine nucleotide metabolism. The protein is Adenylate kinase of Nocardioides sp. (strain ATCC BAA-499 / JS614).